The chain runs to 251 residues: Aspartate/glutamate leucyltransferase (251 aa).

Belongs to the R-transferase family. Bpt subfamily.

The protein localises to the cytoplasm. It carries out the reaction N-terminal L-glutamyl-[protein] + L-leucyl-tRNA(Leu) = N-terminal L-leucyl-L-glutamyl-[protein] + tRNA(Leu) + H(+). The enzyme catalyses N-terminal L-aspartyl-[protein] + L-leucyl-tRNA(Leu) = N-terminal L-leucyl-L-aspartyl-[protein] + tRNA(Leu) + H(+). Its function is as follows. Functions in the N-end rule pathway of protein degradation where it conjugates Leu from its aminoacyl-tRNA to the N-termini of proteins containing an N-terminal aspartate or glutamate. This Xanthomonas axonopodis pv. citri (strain 306) protein is Aspartate/glutamate leucyltransferase.